Consider the following 340-residue polypeptide: Dihydroorotate dehydrogenase (quinone) (340 aa).

FMN is bound by residues 65 to 69 and threonine 89; that span reads AGADK. Lysine 69 provides a ligand contact to substrate. Position 114-118 (114-118) interacts with substrate; it reads NRNGF. 2 residues coordinate FMN: asparagine 142 and asparagine 175. Residue asparagine 175 participates in substrate binding. The active-site Nucleophile is the serine 178. Asparagine 180 lines the substrate pocket. 2 residues coordinate FMN: lysine 220 and threonine 248. 249-250 contributes to the substrate binding site; sequence NT. FMN-binding positions include glycine 271, glycine 300, and 321–322; that span reads YS.

Belongs to the dihydroorotate dehydrogenase family. Type 2 subfamily. As to quaternary structure, monomer. FMN serves as cofactor.

It is found in the cell membrane. It catalyses the reaction (S)-dihydroorotate + a quinone = orotate + a quinol. The protein operates within pyrimidine metabolism; UMP biosynthesis via de novo pathway; orotate from (S)-dihydroorotate (quinone route): step 1/1. In terms of biological role, catalyzes the conversion of dihydroorotate to orotate with quinone as electron acceptor. This is Dihydroorotate dehydrogenase (quinone) from Actinobacillus succinogenes (strain ATCC 55618 / DSM 22257 / CCUG 43843 / 130Z).